The chain runs to 161 residues: Cyclic pyranopterin monophosphate synthase (161 aa).

Substrate contacts are provided by residues 75-77 and 113-114; these read LCH and ME. D128 is a catalytic residue.

This sequence belongs to the MoaC family. In terms of assembly, homohexamer; trimer of dimers.

It catalyses the reaction (8S)-3',8-cyclo-7,8-dihydroguanosine 5'-triphosphate = cyclic pyranopterin phosphate + diphosphate. Its pathway is cofactor biosynthesis; molybdopterin biosynthesis. In terms of biological role, catalyzes the conversion of (8S)-3',8-cyclo-7,8-dihydroguanosine 5'-triphosphate to cyclic pyranopterin monophosphate (cPMP). The protein is Cyclic pyranopterin monophosphate synthase of Salmonella dublin (strain CT_02021853).